We begin with the raw amino-acid sequence, 408 residues long: Putative glutamate--cysteine ligase 2 (408 aa).

Belongs to the glutamate--cysteine ligase type 2 family. YbdK subfamily.

It carries out the reaction L-cysteine + L-glutamate + ATP = gamma-L-glutamyl-L-cysteine + ADP + phosphate + H(+). ATP-dependent carboxylate-amine ligase which exhibits weak glutamate--cysteine ligase activity. In Bradyrhizobium sp. (strain ORS 278), this protein is Putative glutamate--cysteine ligase 2.